Consider the following 252-residue polypeptide: Transcriptional regulatory protein HptR (252 aa).

In terms of domain architecture, Response regulatory spans Lys-3–Val-118. Asp-55 is subject to 4-aspartylphosphate. Residues Asn-153–Gln-250 form the HTH araC/xylS-type domain. 2 DNA-binding regions (H-T-H motif) span residues Ser-170–Val-191 and His-217–Leu-240.

Post-translationally, phosphorylated by HptS.

Its subcellular location is the cytoplasm. In terms of biological role, member of the two-component regulatory system HptS/HptR that regulates genes involved in hexose phosphate transport system in response to changes in extracellular phosphate sources. Activates uhpT expression to facilitate glucose-6-phosphate/G6P utilization by directly binding to its promoter. Antagonizes CcpA-dependent transcription of a subset of CcpA-regulated genes involved in antibiotic susceptibility. This chain is Transcriptional regulatory protein HptR (hptR), found in Staphylococcus aureus (strain NCTC 8325 / PS 47).